A 316-amino-acid chain; its full sequence is Polyprenyl transferase ausN (316 aa).

The next 9 membrane-spanning stretches (helical) occupy residues 45 to 65, 69 to 89, 108 to 128, 129 to 149, 163 to 183, 188 to 208, 233 to 253, 256 to 276, and 296 to 316; these read VVGV…TFLL, VILS…NDLI, GAVS…CGGS, LLLL…FFAL, LILT…DMNP, IPTL…DIVY, DQIA…GGIL, LGIP…LRFL, and SCLL…CVRL.

The protein belongs to the UbiA prenyltransferase family. Mg(2+) serves as cofactor.

It is found in the membrane. The catalysed reaction is 3,5-dimethylorsellinate + (2E,6E)-farnesyl diphosphate = (3R)-3-farnesyl-6-hydroxy-2,3,5-trimethyl-4-oxocyclohexa-1,5-diene-1-carboxylate + diphosphate + H(+). It participates in secondary metabolite biosynthesis; terpenoid biosynthesis. Polyprenyl transferase; part of the gene cluster A that mediates the biosynthesis of the fungal meroterpenoid acetoxydehydroaustin. The first step of the pathway is the synthesis of 3,5-dimethylorsellinic acid by the polyketide synthase ausA. 3,5-dimethylorsellinic acid is then prenylated by the polyprenyl transferase ausN. Further epoxidation by the FAD-dependent monooxygenase ausM and cyclization by the probable terpene cyclase ausL lead to the formation of protoaustinoid A. Protoaustinoid A is then oxidized to spiro-lactone preaustinoid A3 by the combined action of the FAD-binding monooxygenases ausB and ausC, and the dioxygenase ausE. Acid-catalyzed keto-rearrangement and ring contraction of the tetraketide portion of preaustinoid A3 by ausJ lead to the formation of preaustinoid A4. The aldo-keto reductase ausK, with the help of ausH, is involved in the next step by transforming preaustinoid A4 into isoaustinone which is in turn hydroxylated by the P450 monooxygenase ausI to form austinolide. The cytochrome P450 monooxygenase ausG then modifies austinolide to austinol. Austinol is further acetylated to austin by the O-acetyltransferase ausP, which spontaneously changes to dehydroaustin. The cytochrome P450 monooxygenase then converts dehydroaustin is into 7-dehydrodehydroaustin. The hydroxylation catalyzed by ausR permits the second O-acetyltransferase ausQ to add an additional acetyl group to the molecule, leading to the formation of acetoxydehydroaustin. Due to genetic rearrangements of the clusters and the subsequent loss of some enzymes, the end product of the Penicillium brasilianum austinoid biosynthesis clusters is acetoxydehydroaustin. The sequence is that of Polyprenyl transferase ausN from Penicillium brasilianum.